The chain runs to 173 residues: Shikimate kinase 1 (173 aa).

ATP is bound at residue 14 to 19 (GAGKST). Ser18 provides a ligand contact to Mg(2+). 3 residues coordinate substrate: Asp36, Arg60, and Gly82. Residue Arg120 participates in ATP binding. Arg140 provides a ligand contact to substrate. Gln157 contacts ATP.

This sequence belongs to the shikimate kinase family. In terms of assembly, monomer. It depends on Mg(2+) as a cofactor.

It localises to the cytoplasm. It carries out the reaction shikimate + ATP = 3-phosphoshikimate + ADP + H(+). The protein operates within metabolic intermediate biosynthesis; chorismate biosynthesis; chorismate from D-erythrose 4-phosphate and phosphoenolpyruvate: step 5/7. Catalyzes the specific phosphorylation of the 3-hydroxyl group of shikimic acid using ATP as a cosubstrate. This Enterobacter sp. (strain 638) protein is Shikimate kinase 1.